Consider the following 72-residue polypeptide: Large ribosomal subunit protein uL30 (72 aa).

It belongs to the universal ribosomal protein uL30 family. As to quaternary structure, part of the 50S ribosomal subunit.

This Mycobacterium ulcerans (strain Agy99) protein is Large ribosomal subunit protein uL30.